Reading from the N-terminus, the 696-residue chain is Gametogenetin-binding protein 2 (696 aa).

Serine 360 is modified (phosphoserine).

Interacts with GGN.

It localises to the cytoplasmic vesicle. May be involved in spermatogenesis. In Rattus norvegicus (Rat), this protein is Gametogenetin-binding protein 2 (Ggnbp2).